Consider the following 432-residue polypeptide: uncharacterized protein (432 aa).

SIS domains lie at 105-244 (WLTE…DLVS) and 277-422 (CDKK…VDLP).

This is an uncharacterized protein from Saccharomyces cerevisiae (strain Lalvin EC1118 / Prise de mousse) (Baker's yeast).